Reading from the N-terminus, the 472-residue chain is Divinyl ether synthase CYP74 (472 aa).

Cys425 contributes to the heme binding site.

The protein belongs to the cytochrome P450 family. It depends on heme as a cofactor. Expressed mainly in bulbs, and at lower levels in roots.

It carries out the reaction (13S)-hydroperoxy-(9Z,11E)-octadecadienoate = etheroleate + H2O. It catalyses the reaction (13S)-hydroperoxy-(9Z,11E,15Z)-octadecatrienoate = etherolenate + H2O. The catalysed reaction is (9S)-hydroperoxy-(10E,12Z)-octadecadienoate = colneleate + H2O. The enzyme catalyses (9S)-hydroperoxy-(10E,12Z,15Z)-octadecatrienoate = colnelenate + H2O. It participates in lipid metabolism; oxylipin biosynthesis. In terms of biological role, divinyl ether synthase involved in oxylipin biosynthesis. Catalyzes the conversion of (13S)-hydroperoxy-(9Z,11E)-octadecadienoate (13-HPOD) to etheroleate and (13S)-hydroperoxy-(9Z,11E,15Z)-octadecatrienoate (13-HPOT) to etherolenate. Catalyzes the conversion of (9S)-hydroperoxy-(10E,12Z)-octadecadienoate (9-HPOD) to colneleate and (9S)-hydroperoxy-(10E,12Z,15Z)-octadecatrienoate (9-HPOT) colnelenate. This Allium sativum (Garlic) protein is Divinyl ether synthase CYP74.